A 412-amino-acid chain; its full sequence is Na(+)-translocating NADH-quinone reductase subunit B (412 aa).

3 helical membrane passes run 57–77 (MILV…NVGL), 127–147 (VFFL…EVLF), and 163–183 (SILF…ALGI). T236 carries the post-translational modification FMN phosphoryl threonine. The next 5 membrane-spanning stretches (helical) occupy residues 270 to 290 (GSIG…ILFG), 297 to 317 (IVAG…VIGS), 322 to 342 (MFAM…GMMF), 358 to 378 (WSYG…NPAY), and 381 to 401 (GMML…YLVV).

It belongs to the NqrB/RnfD family. As to quaternary structure, composed of six subunits; NqrA, NqrB, NqrC, NqrD, NqrE and NqrF. Requires FMN as cofactor.

It localises to the cell inner membrane. The catalysed reaction is a ubiquinone + n Na(+)(in) + NADH + H(+) = a ubiquinol + n Na(+)(out) + NAD(+). Functionally, NQR complex catalyzes the reduction of ubiquinone-1 to ubiquinol by two successive reactions, coupled with the transport of Na(+) ions from the cytoplasm to the periplasm. NqrA to NqrE are probably involved in the second step, the conversion of ubisemiquinone to ubiquinol. This chain is Na(+)-translocating NADH-quinone reductase subunit B, found in Klebsiella pneumoniae subsp. pneumoniae (strain ATCC 700721 / MGH 78578).